The following is a 257-amino-acid chain: Thioredoxin-dependent peroxide reductase, mitochondrial (257 aa).

The transit peptide at 1-62 directs the protein to the mitochondrion; the sequence is MAAAAGRLLW…SAFSTSSSFH (62 aa). The Thioredoxin domain occupies 64-222; sequence PAVTQHAPYF…TLRLVKAFQF (159 aa). Lysine 84 is modified (N6-succinyllysine). Lysine 92 carries the N6-acetyllysine; alternate modification. Lysine 92 bears the N6-succinyllysine; alternate mark. The Cysteine sulfenic acid (-SOH) intermediate role is filled by cysteine 109. Threonine 147 carries the post-translational modification Phosphothreonine.

This sequence belongs to the peroxiredoxin family. AhpC/Prx1 subfamily. As to quaternary structure, homodimer; disulfide-linked, upon oxidation. 6 homodimers assemble to form a ring-like dodecamer. Interacts with NEK6. Interacts with LRRK2. Interacts with MAP3K13. Interacts with RPS6KC1 (via PX domain). Post-translationally, phosphorylated by LRRK2; phosphorylation reduces perodixase activity. In terms of processing, the enzyme can be inactivated by further oxidation of the cysteine sulfenic acid (C(P)-SOH) to sulphinic acid (C(P)-SO2H) and sulphonic acid (C(P)-SO3H) instead of its condensation to a disulfide bond. S-palmitoylated. In terms of tissue distribution, housekeeping-type gene preferentially expressed in murine erythroleukemia (MEL) cells.

Its subcellular location is the mitochondrion. It localises to the cytoplasm. The protein localises to the early endosome. It catalyses the reaction a hydroperoxide + [thioredoxin]-dithiol = an alcohol + [thioredoxin]-disulfide + H2O. Functionally, thiol-specific peroxidase that catalyzes the reduction of hydrogen peroxide and organic hydroperoxides to water and alcohols, respectively. Plays a role in cell protection against oxidative stress by detoxifying peroxides. Acts synergistically with MAP3K13 to regulate the activation of NF-kappa-B in the cytosol. Required for the maintenance of physical strength. This chain is Thioredoxin-dependent peroxide reductase, mitochondrial (Prdx3), found in Mus musculus (Mouse).